We begin with the raw amino-acid sequence, 1607 residues long: Laminin subunit gamma-1 (1607 aa).

An N-terminal signal peptide occupies residues 1 to 33 (MTGGGRAALALQPRGRLWPLLAVLAAVAGCVRA). The 240-residue stretch at 44 to 283 (RPQRCMPEFV…AISDFAVGGR (240 aa)) folds into the Laminin N-terminal domain. N-linked (GlcNAc...) asparagine glycans are attached at residues Asn58 and Asn132. Cystine bridges form between Cys284/Cys293, Cys286/Cys303, Cys305/Cys314, Cys340/Cys349, Cys342/Cys365, Cys368/Cys377, Cys380/Cys393, Cys396/Cys408, Cys398/Cys414, Cys416/Cys425, Cys428/Cys440, Cys443/Cys454, Cys445/Cys461, Cys463/Cys472, and Cys475/Cys490. Laminin EGF-like domains are found at residues 284 to 339 (CKCN…ESLP), 340 to 395 (CDCN…ACSP), 396 to 442 (CHCS…GCRP), and 443 to 492 (CSCD…GCTP). The region spanning 493 to 502 (CFCFGHSSVC) is the Laminin EGF-like 5; first part domain. A Laminin IV type A domain is found at 512-687 (DISSTFQIDE…PGVPATWVES (176 aa)). N-linked (GlcNAc...) asparagine glycans are attached at residues Asn574 and Asn648. The 34-residue stretch at 688–721 (CTCPVGYGGQFCETCLPGYRRETPSLGPYSPCVL) folds into the Laminin EGF-like 5; second part domain. Intrachain disulfides connect Cys722–Cys731, Cys724–Cys738, Cys740–Cys749, Cys752–Cys768, Cys771–Cys779, Cys773–Cys790, Cys793–Cys802, Cys805–Cys823, Cys826–Cys840, Cys828–Cys847, Cys850–Cys859, Cys862–Cys879, Cys882–Cys896, Cys884–Cys903, Cys905–Cys914, Cys917–Cys930, Cys933–Cys945, Cys935–Cys952, Cys954–Cys963, Cys966–Cys978, Cys981–Cys993, Cys983–Cys999, Cys1001–Cys1010, and Cys1013–Cys1026. Laminin EGF-like domains are found at residues 722–770 (CTCN…DCQP) and 771–825 (CPCP…LCRP). Residues 826-881 (CQCNDNIDPNAVGNCNRLTGECLKCIYNTAGFYCDRCKEGFFGNPLAPNPADKCKA) enclose the Laminin EGF-like 8; nidogen-binding domain. 3 Laminin EGF-like domains span residues 882-932 (CACN…GCER), 933-980 (CDCH…GCKP), and 981-1028 (CDCH…GCQE). Asn1020 and Asn1105 each carry an N-linked (GlcNAc...) asparagine glycan. The domain II and I stretch occupies residues 1029-1607 (CPACYRLVKD…CFNTPSIEKP (579 aa)). The stretch at 1034-1594 (RLVKDKAAEH…HNLEDIKKTL (561 aa)) forms a coiled coil. Residue Ser1147 is modified to Phosphoserine. Asn1159, Asn1173, Asn1203, Asn1221, Asn1239, Asn1378, Asn1393, and Asn1437 each carry an N-linked (GlcNAc...) asparagine glycan. Ser1491 is modified (phosphoserine).

In terms of assembly, laminin is a complex glycoprotein, consisting of three different polypeptide chains (alpha, beta, gamma), which are bound to each other by disulfide bonds into a cross-shaped molecule comprising one long and three short arms with globules at each end. Gamma-1 is a subunit of laminin-1 (laminin-111 or EHS laminin), laminin-2 (laminin-211 or merosin), laminin-3 (laminin-121 or S-laminin), laminin-4 (laminin-221 or S-merosin), laminin-6 (laminin-311 or K-laminin), laminin-7 (laminin-321 or KS-laminin), laminin-8 (laminin-411), laminin-9 (laminin-421), laminin-10 (laminin-511) and laminin-11 (laminin-521). Interacts with SVEP1. In terms of tissue distribution, found in the basement membranes (major component).

The protein resides in the secreted. The protein localises to the extracellular space. Its subcellular location is the extracellular matrix. It is found in the basement membrane. Its function is as follows. Binding to cells via a high affinity receptor, laminin is thought to mediate the attachment, migration and organization of cells into tissues during embryonic development by interacting with other extracellular matrix components. This chain is Laminin subunit gamma-1 (Lamc1), found in Mus musculus (Mouse).